A 123-amino-acid chain; its full sequence is Protein LLP homolog (123 aa).

Residues 1-21 (MAKSLRSKWKRKMRAEKRKKN) are compositionally biased toward basic residues. 2 disordered regions span residues 1 to 22 (MAKS…KKNA) and 61 to 123 (DLDV…KLAW). Positions 70 to 89 (ESSKMDTELKRNKKNLRDQH) are enriched in basic and acidic residues. The span at 100–123 (QQKKLKSQCGKKKGKSKQAKKLAW) shows a compositional bias: basic residues.

Belongs to the learning-associated protein family.

The protein resides in the nucleus. Its subcellular location is the nucleolus. It localises to the chromosome. Regulates dendritic and spine growth and synaptic transmission. This is Protein LLP homolog (llph) from Xenopus laevis (African clawed frog).